The chain runs to 509 residues: uncharacterized protein (509 aa).

The region spanning 358–480 (RRIVIIDAIS…IIPFIVENGE (123 aa)) is the RNase NYN domain.

This is an uncharacterized protein from Methanocaldococcus jannaschii (strain ATCC 43067 / DSM 2661 / JAL-1 / JCM 10045 / NBRC 100440) (Methanococcus jannaschii).